Here is a 100-residue protein sequence, read N- to C-terminus: Large ribosomal subunit protein uL23 (100 aa).

This sequence belongs to the universal ribosomal protein uL23 family. In terms of assembly, part of the 50S ribosomal subunit. Contacts protein L29, and trigger factor when it is bound to the ribosome.

One of the early assembly proteins it binds 23S rRNA. One of the proteins that surrounds the polypeptide exit tunnel on the outside of the ribosome. Forms the main docking site for trigger factor binding to the ribosome. The polypeptide is Large ribosomal subunit protein uL23 (Shewanella oneidensis (strain ATCC 700550 / JCM 31522 / CIP 106686 / LMG 19005 / NCIMB 14063 / MR-1)).